The chain runs to 82 residues: ATP synthase subunit c (82 aa).

2 consecutive transmembrane segments (helical) span residues 7-27 (AASV…PGIG) and 57-77 (FAFM…LLFA).

Belongs to the ATPase C chain family. In terms of assembly, F-type ATPases have 2 components, F(1) - the catalytic core - and F(0) - the membrane proton channel. F(1) has five subunits: alpha(3), beta(3), gamma(1), delta(1), epsilon(1). F(0) has four main subunits: a(1), b(1), b'(1) and c(10-14). The alpha and beta chains form an alternating ring which encloses part of the gamma chain. F(1) is attached to F(0) by a central stalk formed by the gamma and epsilon chains, while a peripheral stalk is formed by the delta, b and b' chains.

It is found in the cellular thylakoid membrane. Functionally, f(1)F(0) ATP synthase produces ATP from ADP in the presence of a proton or sodium gradient. F-type ATPases consist of two structural domains, F(1) containing the extramembraneous catalytic core and F(0) containing the membrane proton channel, linked together by a central stalk and a peripheral stalk. During catalysis, ATP synthesis in the catalytic domain of F(1) is coupled via a rotary mechanism of the central stalk subunits to proton translocation. Key component of the F(0) channel; it plays a direct role in translocation across the membrane. A homomeric c-ring of between 10-14 subunits forms the central stalk rotor element with the F(1) delta and epsilon subunits. The sequence is that of ATP synthase subunit c from Prochlorococcus marinus (strain NATL1A).